The sequence spans 122 residues: Histone H2B, gonadal (122 aa).

Residues 1–31 (MPPKVSSKGAKKAGKAKAARSGDKKRKRRRK) are disordered. A compositionally biased stretch (basic residues) spans 9–31 (GAKKAGKAKAARSGDKKRKRRRK). Serine 109 carries O-linked (GlcNAc) serine glycosylation. A Glycyl lysine isopeptide (Lys-Gly) (interchain with G-Cter in ubiquitin) cross-link involves residue lysine 117.

Belongs to the histone H2B family. As to quaternary structure, the nucleosome is a histone octamer containing two molecules each of H2A, H2B, H3 and H4 assembled in one H3-H4 heterotetramer and two H2A-H2B heterodimers. The octamer wraps approximately 147 bp of DNA. Post-translationally, monoubiquitination of Lys-117 gives a specific tag for epigenetic transcriptional activation and is also prerequisite for histone H3 'Lys-4' and 'Lys-79' methylation. In terms of processing, glcNAcylation at Ser-109 promotes monoubiquitination of Lys-117. It fluctuates in response to extracellular glucose, and associates with transcribed genes.

The protein resides in the nucleus. It is found in the chromosome. Its function is as follows. Core component of nucleosome. Nucleosomes wrap and compact DNA into chromatin, limiting DNA accessibility to the cellular machineries which require DNA as a template. Histones thereby play a central role in transcription regulation, DNA repair, DNA replication and chromosomal stability. DNA accessibility is regulated via a complex set of post-translational modifications of histones, also called histone code, and nucleosome remodeling. The protein is Histone H2B, gonadal of Patella granatina (Sandpaper limpet).